A 193-amino-acid chain; its full sequence is Ribonuclease HII (193 aa).

Positions 1-193 constitute an RNase H type-2 domain; that stretch reads MTLGIDEAGR…SFALKNNWFS (193 aa). The a divalent metal cation site is built by Asp6, Glu7, and Asp103.

The protein belongs to the RNase HII family. Mn(2+) is required as a cofactor. Requires Mg(2+) as cofactor.

It localises to the cytoplasm. It carries out the reaction Endonucleolytic cleavage to 5'-phosphomonoester.. Functionally, endonuclease that specifically degrades the RNA of RNA-DNA hybrids. The chain is Ribonuclease HII from Helicobacter acinonychis (strain Sheeba).